A 206-amino-acid chain; its full sequence is Uridine kinase (206 aa).

11-18 (GGTGSGKS) is an ATP binding site.

Belongs to the uridine kinase family.

The protein localises to the cytoplasm. The enzyme catalyses uridine + ATP = UMP + ADP + H(+). It catalyses the reaction cytidine + ATP = CMP + ADP + H(+). Its pathway is pyrimidine metabolism; CTP biosynthesis via salvage pathway; CTP from cytidine: step 1/3. It functions in the pathway pyrimidine metabolism; UMP biosynthesis via salvage pathway; UMP from uridine: step 1/1. This chain is Uridine kinase, found in Clostridium botulinum (strain Langeland / NCTC 10281 / Type F).